A 506-amino-acid polypeptide reads, in one-letter code: Zinc finger protein 157 (506 aa).

The 72-residue stretch at 27–98 (VSFEDVAVDF…EEESSGHGYS (72 aa)) folds into the KRAB domain. 12 C2H2-type zinc fingers span residues 162 to 184 (FECHECGKAYCRKSNLVEHLRIH), 190 to 212 (YECGECAKTFSARSYLIAHQKTH), 218 to 240 (FECNECGKSFGRKSQLILHTRTH), 246 to 268 (YECTECGKTFSEKATLTIHQRTH), 274 to 296 (YECSECGKTFRVKISLTQHHRTH), 302 to 324 (YECGECGKNFRAKKSLNQHQRIH), 330 to 352 (YECGECGKFFRMKMTLNNHQRTH), 358 to 380 (YQCNECGKSFRVHSSLGIHQRIH), 386 to 408 (YECNECGNAFYVKARLIEHQRMH), 414 to 436 (YECSECGKIFSMKKSLCQHRRTH), 442 to 464 (YECSECGNAFYVKVRLIEHQRIH), and 470 to 492 (FECQECGKAFCRKAHLTEHQRTH).

This sequence belongs to the krueppel C2H2-type zinc-finger protein family.

Its subcellular location is the nucleus. In terms of biological role, may be involved in transcriptional regulation. The sequence is that of Zinc finger protein 157 (ZNF157) from Homo sapiens (Human).